The primary structure comprises 146 residues: Urease accessory protein UreE 1 (146 aa).

The protein belongs to the UreE family.

The protein localises to the cytoplasm. Its function is as follows. Involved in urease metallocenter assembly. Binds nickel. Probably functions as a nickel donor during metallocenter assembly. The protein is Urease accessory protein UreE 1 of Pseudomonas syringae pv. syringae (strain B728a).